The primary structure comprises 976 residues: Terminal uridylyltransferase 1 (976 aa).

Disordered stretches follow at residues 1–47 (MVSK…DADF) and 129–185 (TGRS…TTEG). Residues 1–188 (MVSKYHRLLQ…EDDTTEGPRG (188 aa)) form a required for oligomerization and may contribute to the incorporation into the MPsome complex region. Residues 147-183 (ADDESDGNLDTDGSDASEGDEVESTTDADVYGEDDTT) are compositionally biased toward acidic residues. The C2H2-type; atypical zinc-finger motif lies at 190-221 (VRLYSCDACPHAVFTTHAALLAHAEEHHADLL). Zn(2+) is bound by residues cysteine 195, cysteine 198, histidine 212, and histidine 217. Residues serine 298 and 309 to 312 (ADID) contribute to the UTP site. Mg(2+)-binding residues include aspartate 310 and aspartate 312. Arginine 358 contacts RNA. In terms of domain architecture, PAP-associated spans 366-425 (ASSPILTVARRDAEDVVARSIRFILNGPATREDRLLLEGSVRDAVGPTGVQQVWWNRTSD). UTP is bound by residues 480–484 (GIRNS), lysine 505, lysine 509, and 523–524 (SY). The Nucleotide recognition motif (NRM) motif lies at 652-661 (IEDPYEENLN). The tract at residues 700 to 976 (DSSGTPAAGG…SKVTPFKSPR (277 aa)) is important for catalytic activity and RNA binding. The interval 732 to 755 (SESRRLPQSNSDNSGRIANGDNES) is disordered.

Belongs to the DNA polymerase type-B-like family. As to quaternary structure, oligomer. Component of the mitochondrial 3' processome (MPsome) complex composed at least of terminal uridylyltransferase KRET1/TUT1, 3'-5' exonuclease DSS1, MPSS1, MPSS2 and MPSS3. Within the complex, interacts with DSS1, MPSS1 and MPSS3. Mg(2+) is required as a cofactor. The cofactor is Mn(2+).

Its subcellular location is the mitochondrion. It catalyses the reaction RNA(n) + UTP = RNA(n)-3'-uridine ribonucleotide + diphosphate. Its function is as follows. Terminal uridylyltransferase which is involved in the post-transcriptional editing of mitochondrial RNA, a process involving the addition and deletion of uridine (U) nucleotides in the pre-RNA. Specifically, catalyzes the addition of Us to the 3'-hydroxyl group of guided RNA (gRNA), ribosomal RNA (rRNA) and some mRNAs. As part of the mitochondrial 3' processome (MPsome), catalyzes the primary 3' uridylation of gRNA precursors to facilitate their recognition and to induce their processive 3'-5' degradation by DSS1, and the secondary 3' uridylation of mature gRNAs. Involved in the 3' uridylylation of the long A/U tail of some edited and never-edited mRNAs. Promotes 3' uridylylation-mediated decay of some never-edited mRNAs. Does not mediate RNA-independent UTP polymerization. This Trypanosoma brucei brucei protein is Terminal uridylyltransferase 1.